The primary structure comprises 83 residues: Mu-theraphotoxin-Hhn2f (83 aa).

Residues 1–21 (MKASMFLALAGLVLLFVVGYA) form the signal peptide. A propeptide spanning residues 22 to 48 (SESEEKEFPIELLSKIFAVDVFKGEER) is cleaved from the precursor. Disulfide bonds link C50-C65, C57-C70, and C64-C77. Leucine amide is present on L81.

This sequence belongs to the neurotoxin 10 (Hwtx-1) family. 15 (Hntx-3) subfamily. Monomer. Expressed by the venom gland.

It localises to the secreted. In terms of biological role, lethal neurotoxin. Selectively blocks tetrodotoxin-sensitive voltage-gated sodium channels (Nav). Does not affect tetrodotoxin-resistant voltage-gated sodium channels or calcium channels. This Cyriopagopus hainanus (Chinese bird spider) protein is Mu-theraphotoxin-Hhn2f.